Reading from the N-terminus, the 1035-residue chain is Cell-division control histidine kinase PdhS (1035 aa).

The interval 1–613 (MSGSYPFIDI…HADGSEEPVD (613 aa)) is important for polar localization. A disordered region spans residues 500–533 (QGLANTRAESETPVSETSSIEPVEPTPPVKTRSE). An interaction with DivK region spans residues 614-1035 (AHLNAIAWRG…VFPPTRVLAD (422 aa)). The PAS domain maps to 659 to 730 (HVEELKTILD…YLHGLSGNGV (72 aa)). The region spanning 802–1031 (RISHEIRTPL…VVEIVFPPTR (230 aa)) is the Histidine kinase domain. His805 carries the phosphohistidine; by autocatalysis modification.

In terms of assembly, interacts with DivK.

It localises to the cytoplasm. The enzyme catalyses ATP + protein L-histidine = ADP + protein N-phospho-L-histidine.. Functions as a polar differentiation marker. Essential protein that, by localizing in the old pole of dividing cells, controls cell division and maturation, probably through control of DivK phosphorylation status and cellular distribution, which in turn regulates CtrA, a transcriptional regulator of the minB operon. The asymmetrical localization of this protein is probably required for cells to enter a new division cycle. The chain is Cell-division control histidine kinase PdhS (pdhS) from Brucella ovis (strain ATCC 25840 / 63/290 / NCTC 10512).